A 368-amino-acid polypeptide reads, in one-letter code: tRNA-specific 2-thiouridylase MnmA (368 aa).

Residues 11-18 and methionine 37 contribute to the ATP site; that span reads GMSGGVDS. An interaction with target base in tRNA region spans residues 97-99; sequence NPD. Catalysis depends on cysteine 102, which acts as the Nucleophile. The cysteines at positions 102 and 199 are disulfide-linked. An ATP-binding site is contributed by glycine 127. The segment at 149–151 is interaction with tRNA; that stretch reads KDQ. The Cysteine persulfide intermediate role is filled by cysteine 199. Residues 311-312 are interaction with tRNA; the sequence is RY.

Belongs to the MnmA/TRMU family. Interacts with TusE.

Its subcellular location is the cytoplasm. The catalysed reaction is S-sulfanyl-L-cysteinyl-[protein] + uridine(34) in tRNA + AH2 + ATP = 2-thiouridine(34) in tRNA + L-cysteinyl-[protein] + A + AMP + diphosphate + H(+). In terms of biological role, catalyzes the 2-thiolation of uridine at the wobble position (U34) of tRNA(Lys), tRNA(Glu) and tRNA(Gln), leading to the formation of s(2)U34, the first step of tRNA-mnm(5)s(2)U34 synthesis. Sulfur is provided by IscS, via a sulfur-relay system. Binds ATP and its substrate tRNAs. The protein is tRNA-specific 2-thiouridylase MnmA of Escherichia coli O6:H1 (strain CFT073 / ATCC 700928 / UPEC).